Reading from the N-terminus, the 470-residue chain is UDP-N-acetylmuramate--L-alanine ligase (470 aa).

An ATP-binding site is contributed by 118–124 (GTHGKTT).

It belongs to the MurCDEF family.

It localises to the cytoplasm. It carries out the reaction UDP-N-acetyl-alpha-D-muramate + L-alanine + ATP = UDP-N-acetyl-alpha-D-muramoyl-L-alanine + ADP + phosphate + H(+). It functions in the pathway cell wall biogenesis; peptidoglycan biosynthesis. In terms of biological role, cell wall formation. This Cereibacter sphaeroides (strain ATCC 17029 / ATH 2.4.9) (Rhodobacter sphaeroides) protein is UDP-N-acetylmuramate--L-alanine ligase.